Consider the following 182-residue polypeptide: CDP-diacylglycerol--glycerol-3-phosphate 3-phosphatidyltransferase (182 aa).

The Cytoplasmic segment spans residues glutamine 2 to phenylalanine 12. Residues arginine 13–leucine 37 traverse the membrane as a helical segment. Residues isoleucine 38–threonine 60 lie on the Periplasmic side of the membrane. The chain crosses the membrane as a helical span at residues arginine 61–leucine 81. Residues valine 82–tyrosine 86 are Cytoplasmic-facing. Residues histidine 87–alanine 107 traverse the membrane as a helical segment. The Periplasmic segment spans residues leucine 108–proline 145. Residues asparagine 146–methionine 168 form a helical membrane-spanning segment. Topologically, residues leucine 169 to aspartate 181 are cytoplasmic.

Belongs to the CDP-alcohol phosphatidyltransferase class-I family.

The protein localises to the cell inner membrane. It catalyses the reaction a CDP-1,2-diacyl-sn-glycerol + sn-glycerol 3-phosphate = a 1,2-diacyl-sn-glycero-3-phospho-(1'-sn-glycero-3'-phosphate) + CMP + H(+). The protein operates within phospholipid metabolism; phosphatidylglycerol biosynthesis; phosphatidylglycerol from CDP-diacylglycerol: step 1/2. Catalyzes the conversion of cytidine diphosphate diacylglycerol (CDP-DG) and glycerol 3-phosphate into phosphatidylglycerol. Essential for the synthesis of anionic phospholipids, thereby playing a role in balancing the ratio of zwitterionic and anionic phospholipids, which is thought to be important for normal membrane function. The sequence is that of CDP-diacylglycerol--glycerol-3-phosphate 3-phosphatidyltransferase from Salmonella choleraesuis (strain SC-B67).